The following is a 163-amino-acid chain: Cyclic pyranopterin monophosphate synthase (163 aa).

Substrate contacts are provided by residues 75–77 (LCH) and 113–114 (ME). The active site involves D128.

Belongs to the MoaC family. Homohexamer; trimer of dimers.

The catalysed reaction is (8S)-3',8-cyclo-7,8-dihydroguanosine 5'-triphosphate = cyclic pyranopterin phosphate + diphosphate. The protein operates within cofactor biosynthesis; molybdopterin biosynthesis. In terms of biological role, catalyzes the conversion of (8S)-3',8-cyclo-7,8-dihydroguanosine 5'-triphosphate to cyclic pyranopterin monophosphate (cPMP). The protein is Cyclic pyranopterin monophosphate synthase of Magnetococcus marinus (strain ATCC BAA-1437 / JCM 17883 / MC-1).